A 470-amino-acid chain; its full sequence is MKNCSRRQLLKTTLFSTALFSVPAPLLAATRPTLTIPPLFETRRGKPIFLNLQNTQASLLPGKRTEVWGFNGVYLGPTIKIKKDDFAKLNWKNNLPQFVAMNIQGLQASGELIGGIAKNLQKDETWAPIIPITQAPSTCWYHACTLANSAYQTYRGLLGLWMIEDKESTKLGLPQKYGVDDIPLILQDMQLNTEGTQLFQQHQGRFIGERLFVNGQEAPYLTVPRGLVRLRVLNASLSRTYELRFDDEREFTLIAQDLGFLPQGQKRNVVMLAPSERVEILVDLNDGENVSLITGTKRGILDNISHFFGSDGELIDNTILELRPEGLAGAFEKKEQTWQFNTDAPSLLSTKVQQERAFHIDVGNATINKNRLDPRRLDVSAKLGSVERWTLSASSPVGFAIRGAKFIVESVNGKALEASEIGWKDSVLINGKVSILVKFENTSSNNYPFTFGASDLMLADKGCIGLMLVQ.

A signal peptide (tat-type signal) is located at residues M1–A29.

This sequence belongs to the FtsP family. Post-translationally, predicted to be exported by the Tat system. The position of the signal peptide cleavage has not been experimentally proven.

It localises to the periplasm. Cell division protein that is required for growth during stress conditions. May be involved in protecting or stabilizing the divisomal assembly under conditions of stress. This chain is Cell division protein FtsP, found in Aggregatibacter aphrophilus (strain NJ8700) (Haemophilus aphrophilus).